A 242-amino-acid chain; its full sequence is Probable septum site-determining protein MinC (242 aa).

Basic and acidic residues predominate over residues 120–135; the sequence is APKKVEEKPAEPEHKP. Positions 120–144 are disordered; that stretch reads APKKVEEKPAEPEHKPSRIVTSPVR.

The protein belongs to the MinC family. In terms of assembly, interacts with MinD and FtsZ.

Functionally, cell division inhibitor that blocks the formation of polar Z ring septums. Rapidly oscillates between the poles of the cell to destabilize FtsZ filaments that have formed before they mature into polar Z rings. Prevents FtsZ polymerization. The protein is Probable septum site-determining protein MinC of Ectopseudomonas mendocina (strain ymp) (Pseudomonas mendocina).